The sequence spans 69 residues: Conopeptide Y-Fe1 (69 aa).

The first 20 residues, 1–20 (MSKLGVVLFVFLLLLPLAAP), serve as a signal peptide directing secretion. The propeptide occupies 21–69 (QPVGDQPADQPADRNAEARGTYLYPFSYYRLWRYFTRFLHKQPYYYVHI).

The protein belongs to the conotoxin M superfamily. Conopeptide Y family. Expressed by the venom duct.

The protein localises to the secreted. Its function is as follows. Tyrosine-rich conopeptide that specifically targets voltage-gated potassium channel Kv1.6/KCNA6 (IC(50) is 8.8 uM) that is expressed in Xenopus oocytes. In vivo, causes seizures (at 5 nmol) and death (20 nmol) when intracranially injected into mice, and causes paralysis (at 10 pmol) to C.elegans. This chain is Conopeptide Y-Fe1, found in Conus ferrugineus (Cone snail).